A 527-amino-acid chain; its full sequence is MPIPTPHGGKLRDLVIRDAPLKQQLLQEAKTLPALTLTARQLCDLELILNGGFSPLTGFLNQEDYNSVVNDLRLSSVKNESNGKGLLWPIPITLDVDETTSKKHSVGDRIVLIDLRDETPLAILTIESIYKPDKKLEAEKVFRGDSEHPANKYLLETAGDYYIGGELQGINYPKHYDYVDARKTPTELRQEFEKLGWAQENIVAFQTRNPMHRAHRELTIRAAQDIGDKAHILIHPVVGLTKPGDIDHHTRVKVYKQILTKFPDGLATLSLLPLAMRMGGDREALWHALIRTNYGVDHFIVGRDHAGPGKNSQGVDFYGPYDAQELLAKYDDELNIKIVPFRMVTYLPDEDRYAPIDTIDVKKVRTANISGTELRNKLKTGDEIPSWFSYPEVVKILRETNPPRSKQGFAILIDNSHKLGDYLSFALQSTLNQFSGERRITKLNAHQANDSFIVGELVKAGSGVIVPTTNPTPIVNVVGNGNSLVVNQKNNNNQASGNADGEFNLSNDDLVAVVDEIVNYLKDQGFY.

Residues 1–176 are N-terminal; sequence MPIPTPHGGK…LQGINYPKHY (176 aa). The tract at residues 177–406 is catalytic; that stretch reads DYVDARKTPT…LRETNPPRSK (230 aa). Q206 lines the sulfate pocket. Residues 206–209 and 302–305 contribute to the ATP site; these read QTRN and GRDH. Residues T207, R208, and N209 contribute to the active site. R208 contacts sulfate. A306 contacts sulfate. V344 serves as a coordination point for ATP. The segment at 407–527 is required for oligomerization; adenylyl-sulfate kinase-like; the sequence is QGFAILIDNS…VNYLKDQGFY (121 aa).

The protein belongs to the sulfate adenylyltransferase family. In terms of assembly, homohexamer. Dimer of trimers.

The protein localises to the cytoplasm. It catalyses the reaction sulfate + ATP + H(+) = adenosine 5'-phosphosulfate + diphosphate. It participates in sulfur metabolism; hydrogen sulfide biosynthesis; sulfite from sulfate: step 1/3. Functionally, catalyzes the first intracellular reaction of sulfate assimilation, forming adenosine-5'-phosphosulfate (APS) from inorganic sulfate and ATP. Plays an important role in sulfate activation as a component of the biosynthesis pathway of sulfur-containing amino acids. The protein is Sulfate adenylyltransferase of Candida albicans (strain SC5314 / ATCC MYA-2876) (Yeast).